The primary structure comprises 227 residues: N-acetyltransferase 8 (227 aa).

Residues 1-35 lie on the Cytoplasmic side of the membrane; the sequence is MASFRIRQFQERDYKQVVDVFSRGMEEHIPTAFRH. Residues 36-56 form a helical; Signal-anchor for type II membrane protein membrane-spanning segment; sequence LLTLPRTLLLLAVVPLAIVLV. Topologically, residues 57-227 are lumenal; it reads SGSWFLAVVC…PLPSAQKYEL (171 aa). Residues 69 to 217 form the N-acetyltransferase domain; it reads FLFLFLWFLA…VDVSLIHFIY (149 aa).

This sequence belongs to the NAT8 family. Expressed in brain (at protein level).

Its subcellular location is the endoplasmic reticulum-Golgi intermediate compartment membrane. The protein resides in the endoplasmic reticulum membrane. The enzyme catalyses L-lysyl-[protein] + acetyl-CoA = N(6)-acetyl-L-lysyl-[protein] + CoA + H(+). It carries out the reaction an S-substituted L-cysteine + acetyl-CoA = an N-acetyl-L-cysteine-S-conjugate + CoA + H(+). It functions in the pathway sulfur metabolism; glutathione metabolism. In terms of biological role, endoplasmic reticulum (ER)-membrane-bound lysine N-acetyltransferase catalyzing the N6-acetylation of lysine residues in the lumen of the ER in various proteins, including PROM1 and BACE1, using acetyl-CoA as acetyl donor. Thereby, may regulate apoptosis through the acetylation and the regulation of the expression of PROM1. May also regulate amyloid beta-peptide secretion through acetylation of BACE1 and the regulation of its expression in neurons. N(6)-lysine acetylation in the ER maintains protein homeostasis and regulates reticulophagy. Alternatively, acetylates the free alpha-amino group of cysteine S-conjugates to form mercapturic acids. This is the final step in a major route for detoxification of a wide variety of reactive electrophiles which starts with their incorporation into glutathione S-conjugates. The glutathione S-conjugates are then further processed into cysteine S-conjugates and finally mercapturic acids which are water soluble and can be readily excreted in urine or bile. This chain is N-acetyltransferase 8 (Nat8), found in Mus musculus (Mouse).